A 364-amino-acid polypeptide reads, in one-letter code: Lytic cellulose monooxygenase (364 aa).

A signal peptide spans 1-34 (MARRSRYISLAAVMATLLSALGVTFLLGQGRAEA). Cu cation-binding residues include His-35 and His-144. Positions 35 to 225 (HGVAMMPGSR…QENFFSCSDV (191 aa)) constitute a Chitin-binding type-4 domain. Residues 234-261 (VTGIRGSGGTPTPTPTPTTPPTTPPPTH) form a disordered region. Residues 245–260 (TPTPTPTTPPTTPPPT) show a composition bias toward pro residues. The 107-residue stretch at 258–364 (PPTHSGSCMA…PVGTIGCVAP (107 aa)) folds into the CBM2 domain.

Requires Cu(2+) as cofactor.

It is found in the secreted. The enzyme catalyses [(1-&gt;4)-beta-D-glucosyl]n+m + reduced acceptor + O2 = [(1-&gt;4)-beta-D-glucosyl]m-1-(1-&gt;4)-D-glucono-1,5-lactone + [(1-&gt;4)-beta-D-glucosyl]n + acceptor + H2O.. It participates in glycan metabolism; cellulose degradation. In terms of biological role, involved in the degradation of lignocellulosic biomass. Catalyzes the oxidative cleavage of glycosidic bonds in cellulosic substrates via a copper-dependent mechanism. Degrades phosphoric acid swollen cellulose (PASC) to oxidized cellooligosaccharides with degrees of polymerization of 4-8. Also shows activity on agricultural fiber paper pulps such as flax pulp. Is not active on chitin. The sequence is that of Lytic cellulose monooxygenase from Streptomyces ambofaciens (strain ATCC 23877 / 3486 / DSM 40053 / JCM 4204 / NBRC 12836 / NRRL B-2516).